The chain runs to 218 residues: Glutathione S-transferase Mu 1 (218 aa).

The region spanning 2 to 88 (PMILGYWDIR…YIARKHNLCG (87 aa)) is the GST N-terminal domain. 7 to 8 (YW) lines the glutathione pocket. Position 34 is a phosphothreonine (Thr-34). Glutathione-binding positions include 43–46 (RSQW), Lys-50, 59–60 (NL), and 72–73 (QS). The region spanning 90-208 (TEEEKIRVDI…KSSRFLPRPV (119 aa)) is the GST C-terminal domain. Tyr-116 contributes to the substrate binding site. The residue at position 210 (Ser-210) is a Phosphoserine.

Belongs to the GST superfamily. Mu family. As to quaternary structure, homodimer. In terms of tissue distribution, liver (at protein level).

The protein resides in the cytoplasm. The enzyme catalyses RX + glutathione = an S-substituted glutathione + a halide anion + H(+). The catalysed reaction is prostaglandin A2 + glutathione = prostaglandin A2-S-(R)-glutathione. It catalyses the reaction prostaglandin J2 + glutathione = prostaglandin J2-S-(R)-glutathione. It carries out the reaction prostaglandin J2 + glutathione = prostaglandin J2-S-(S)-glutathione. The enzyme catalyses prostaglandin A2 + glutathione = prostaglandin A2-S-(S)-glutathione. The catalysed reaction is 11(S)-hydroxy-14(S),15(S)-epoxy-(5Z,8Z,12E)-eicosatrienoate + glutathione = (11S,15S)-dihydroxy-14(R)-S-glutathionyl-(5Z,8Z,12E)-eicosatrienoate. Conjugation of reduced glutathione to a wide number of exogenous and endogenous hydrophobic electrophiles. Involved in the formation of glutathione conjugates of both prostaglandin A2 (PGA2) and prostaglandin J2 (PGJ2). Participates in the formation of novel hepoxilin regioisomers. The protein is Glutathione S-transferase Mu 1 of Homo sapiens (Human).